We begin with the raw amino-acid sequence, 288 residues long: Small ribosomal subunit biogenesis GTPase RsgA (288 aa).

The CP-type G domain maps to 61–218 (TNKLIRPPVS…IVDTPGFSSL (158 aa)). Residues 110 to 113 (NKID) and 161 to 169 (GPSGVGKST) contribute to the GTP site. Zn(2+) is bound by residues C242, C247, H249, and C255.

This sequence belongs to the TRAFAC class YlqF/YawG GTPase family. RsgA subfamily. As to quaternary structure, monomer. Associates with 30S ribosomal subunit, binds 16S rRNA. Zn(2+) is required as a cofactor.

It localises to the cytoplasm. Functionally, one of several proteins that assist in the late maturation steps of the functional core of the 30S ribosomal subunit. Helps release RbfA from mature subunits. May play a role in the assembly of ribosomal proteins into the subunit. Circularly permuted GTPase that catalyzes slow GTP hydrolysis, GTPase activity is stimulated by the 30S ribosomal subunit. This is Small ribosomal subunit biogenesis GTPase RsgA from Clostridium acetobutylicum (strain ATCC 824 / DSM 792 / JCM 1419 / IAM 19013 / LMG 5710 / NBRC 13948 / NRRL B-527 / VKM B-1787 / 2291 / W).